Here is a 264-residue protein sequence, read N- to C-terminus: MAAEQRKIIEQLMGSNLSNFTSRGLVHFTDRKVCRSFLCGICPHDIFTNTKMDLGPCPKIHSDKLKSDYERASYSHDYGYEWDYLEDLERHVDDCNKRIDIAEARREKTKEEEERIDELMRDIIHTDHSIEVIITEMEALAKRKLVNDAVKHFIELNRLKTYRKELYDEVISMNEIPSQASTTHQKLQVCDICSAYLSRLDNDRRLADHFSGKMHLGYAMLRNIARDLRAQLEDREKSRDKKDGEKQRDNLASFEDKISTSFVA.

Residues aspartate 83–threonine 126 adopt a coiled-coil conformation. Residues glutamate 233–isoleucine 258 are compositionally biased toward basic and acidic residues. Residues glutamate 233–alanine 264 are disordered.

The protein belongs to the Luc7 family. Component of the U1 snRNP particle, a subcomplex of the spliceosome.

The protein localises to the cytoplasm. The protein resides in the nucleus. In terms of biological role, component of the U1 snRNP particle, which recognizes and binds the 5'-splice site of pre-mRNA. Together with other non-snRNP factors, U1 snRNP forms the spliceosomal commitment complex, that targets pre-mRNA to the splicing pathway. In Schizosaccharomyces pombe (strain 972 / ATCC 24843) (Fission yeast), this protein is U1 snRNP-associated protein usp106 (usp106).